The primary structure comprises 424 residues: MVKRTDGTESPILAEDGGDGHDKPRLRYGELVILGYNGYLPQGDRGRRRSKFVLHKRTEASGVKRSKHYIVQSPQTSKAILDANQHSISYTLSRNQAVIVEYKEDTETDMFQVGRSSESPIDFVVMDTLPGDKKDAKVMQSTISRFACRILVNRCEPAKARIFAAGFDSSRNIFLGEKATKWQDNVEIDGLTTNGVLIMHPKGSFCGGNAKCGLWRECSVGGDVFSLRESRSAQQKGQPIYDECNILQDGTLIDLCGATLLWRSAEGLQHSPTKHDLEKLIDAINAGRPQCPVGLNTLVIPRKVNIGDQVNQPYVYLNCGHVQGHHDWGQDENTGARRCPMCLELGPVVTLCMGLEPAFYVDVGAPTYAFNPCGHMATEKTVKYWANVEIPHGTNGFQAVCPFCATPLDGATGYIKLIFQDNLD.

Residues 1-21 (MVKRTDGTESPILAEDGGDGH) form a disordered region. S10 carries the phosphoserine modification.

This sequence belongs to the pellino family. Interacts with pll.

Functionally, scaffold protein involved in the Toll signaling pathway via its interaction with pelle/pll kinase. The chain is Protein pellino (Pli) from Drosophila melanogaster (Fruit fly).